The following is a 302-amino-acid chain: Paired immunoglobulin-like type 2 receptor alpha (302 aa).

A signal peptide spans 1–31; the sequence is MALLISLPGGTPAMAQILLLLSSACLHAGNS. Topologically, residues 32 to 198 are extracellular; the sequence is ERSNRKNGFG…GGLDLQTTVG (167 aa). Residues N90 and N107 are each glycosylated (N-linked (GlcNAc...) asparagine). The helical transmembrane segment at 199-219 threads the bilayer; sequence LATAAAVFLVGVLGLIVFLWW. At 220 to 302 the chain is on the cytoplasmic side; it reads KRRRQGQKTK…ETVYSIVKAK (83 aa). Residues 228-248 show a composition bias toward basic and acidic residues; sequence TKAEIPAREPLETSEKHESVG. A disordered region spans residues 228-293; that stretch reads TKAEIPAREP…LPVHGNPQEE (66 aa). Short sequence motifs (ITIM motif) lie at residues 265–270 and 294–299; these read IVYASI and TVYSIV. Over residues 270 to 280 the composition is skewed to polar residues; sequence ISLSSPTSPGT.

As to quaternary structure, interacts with CD99. Post-translationally, phosphorylated on tyrosine residues.

The protein resides in the membrane. Its function is as follows. Paired receptors consist of highly related activating and inhibitory receptors and are widely involved in the regulation of the immune system. Receptor for CD99 and PIANP. The protein is Paired immunoglobulin-like type 2 receptor alpha (Pilra) of Mus musculus (Mouse).